The chain runs to 208 residues: MKVLVTGFEPFGGEKINPTERIAKDLDGIKIGDAQVFGRVLPVVFGKAKEVLEKTLEEIKPDIAIHVGLAPGRSAISIERIAVNAIDARIPDNEGKKIEDEPIVPGAPTAYFSTLPIKKIMKKLHERGIPAYISNSAGLYLCNYVMYLSLHHSATKGYPKMSGFIHVPYIPEQIIDKIGKGQVPPSMCYEMELEAVKVAIEVALEELL.

Residues Glu-79, Cys-142, and His-166 contribute to the active site.

It belongs to the peptidase C15 family. As to quaternary structure, homotetramer made of two disulfide-linked dimers.

The protein resides in the cytoplasm. It carries out the reaction Release of an N-terminal pyroglutamyl group from a polypeptide, the second amino acid generally not being Pro.. In terms of biological role, removes 5-oxoproline from various penultimate amino acid residues except L-proline. In Pyrococcus furiosus (strain ATCC 43587 / DSM 3638 / JCM 8422 / Vc1), this protein is Pyrrolidone-carboxylate peptidase (pcp).